The chain runs to 79 residues: UPF0181 protein PC1_1931 (79 aa).

Positions 54–79 (FDEDDDTVNDSDEEHYFDDGEEEDEQ) are disordered.

This sequence belongs to the UPF0181 family.

The sequence is that of UPF0181 protein PC1_1931 from Pectobacterium carotovorum subsp. carotovorum (strain PC1).